The sequence spans 342 residues: Aspartate carbamoyltransferase catalytic subunit (342 aa).

2 residues coordinate carbamoyl phosphate: Arg-59 and Thr-60. Lys-87 provides a ligand contact to L-aspartate. The carbamoyl phosphate site is built by Arg-109, His-142, and Gln-145. 2 residues coordinate L-aspartate: Arg-182 and Arg-253. Carbamoyl phosphate-binding residues include Gly-294 and Pro-295.

It belongs to the aspartate/ornithine carbamoyltransferase superfamily. ATCase family. In terms of assembly, heterododecamer (2C3:3R2) of six catalytic PyrB chains organized as two trimers (C3), and six regulatory PyrI chains organized as three dimers (R2).

It catalyses the reaction carbamoyl phosphate + L-aspartate = N-carbamoyl-L-aspartate + phosphate + H(+). It functions in the pathway pyrimidine metabolism; UMP biosynthesis via de novo pathway; (S)-dihydroorotate from bicarbonate: step 2/3. Its function is as follows. Catalyzes the condensation of carbamoyl phosphate and aspartate to form carbamoyl aspartate and inorganic phosphate, the committed step in the de novo pyrimidine nucleotide biosynthesis pathway. The protein is Aspartate carbamoyltransferase catalytic subunit of Synechococcus sp. (strain WH7803).